The sequence spans 56 residues: MAVQQNKPTRSKRGMRRSHDALTAPLLSVDKTSGETHLRHHVTADGYYRGRKVINK.

The disordered stretch occupies residues 1 to 37; sequence MAVQQNKPTRSKRGMRRSHDALTAPLLSVDKTSGETH.

The protein belongs to the bacterial ribosomal protein bL32 family.

This Photorhabdus laumondii subsp. laumondii (strain DSM 15139 / CIP 105565 / TT01) (Photorhabdus luminescens subsp. laumondii) protein is Large ribosomal subunit protein bL32.